The following is a 555-amino-acid chain: Neutral amino acid transporter B(0) (555 aa).

The residue at position 1 (M1) is an N-acetylmethionine. Residues 1–52 (MAVDPPKADPKGVVAVDPTANCGSGLKSREDQGAKAGGCCSSRDQVCRCLRA) are Cytoplasmic-facing. A helical membrane pass occupies residues 53–82 (NLLVLLTVAAAVAGVVLGLGVSAAGGAEAL). Topologically, residues 83–95 (GHARFTAFAFPGE) are extracellular. The chain crosses the membrane as a helical span at residues 96-117 (LLLRLLEMIILPLVVCSLIGGA). The Cytoplasmic segment spans residues 118 to 131 (ASLDPSALGRLGAW). The helical transmembrane segment at 132 to 154 (ALLFFLVTTLLSSALGVALALAL) threads the bilayer. Over 155–239 (KPGAAFAAIN…SNATMDQPHC (85 aa)) the chain is Extracellular. N-linked (GlcNAc...) asparagine glycosylation is found at N164 and N231. The helical transmembrane segment at 240–262 (EMKMNILGLVVFAIVFGVALRKL) threads the bilayer. At 263 to 271 (GPEGELLIR) the chain is on the cytoplasmic side. A helical membrane pass occupies residues 272–299 (FFNSFNDATMVLVSWIMWYAPIGILFLV). Over 300 to 320 (AGKIVEMKDIRQLFIGLGKYI) the chain is Extracellular. The helical transmembrane segment at 321 to 342 (VCCLLGHAIHGLLVLPLIYFLF) threads the bilayer. The Cytoplasmic segment spans residues 343–347 (TRKNP). The discontinuously helical intramembrane region spans 348–378 (YRFLWGIVTPLATAFGTSSSSATLPLMMKCV). Residues 379-387 (EEKNGVAKH) lie on the Cytoplasmic side of the membrane. A helical membrane pass occupies residues 388–414 (ISRFILPIGATVNMDGAALFQCVAAVF). Na(+)-binding residues include G396, T398, and N400. Residues 415-427 (IAQLNGMSLDFVK) lie on the Extracellular side of the membrane. The segment at residues 428–461 (IITILVTATASSVGAAGIPAGGVLTLAIILEAIS) is an intramembrane region (discontinuously helical). Residues 462 to 474 (LPVKDISLILAVD) lie on the Extracellular side of the membrane. The chain crosses the membrane as a helical span at residues 475-496 (WLVDRSCTVLNVEGDAFGAGLL). Na(+) is bound by residues N485 and D489. Over 497-555 (QSYVDRTKMPSSEPELIQVKNDVSLKPLPLATEEGNPLLKQCREPSGDSSATCEKESVM) the chain is Cytoplasmic. S507, S508, S520, S545, and S553 each carry phosphoserine. The disordered stretch occupies residues 534–555 (LLKQCREPSGDSSATCEKESVM).

It belongs to the dicarboxylate/amino acid:cation symporter (DAACS) (TC 2.A.23) family. Homotrimer.

It localises to the cell membrane. The protein resides in the melanosome. The catalysed reaction is L-glutamine(out) + L-serine(in) + Na(+)(out) = L-glutamine(in) + L-serine(out) + Na(+)(in). It carries out the reaction L-glutamine(in) + L-serine(out) + Na(+)(out) = L-glutamine(out) + L-serine(in) + Na(+)(in). The enzyme catalyses L-threonine(in) + L-glutamine(out) + Na(+)(out) = L-threonine(out) + L-glutamine(in) + Na(+)(in). It catalyses the reaction L-threonine(out) + L-glutamine(in) + Na(+)(out) = L-threonine(in) + L-glutamine(out) + Na(+)(in). The catalysed reaction is L-asparagine(in) + L-glutamine(out) + Na(+)(out) = L-asparagine(out) + L-glutamine(in) + Na(+)(in). It carries out the reaction L-asparagine(out) + L-glutamine(in) + Na(+)(out) = L-asparagine(in) + L-glutamine(out) + Na(+)(in). The enzyme catalyses L-glutamine(in) + L-alanine(out) + Na(+)(out) = L-glutamine(out) + L-alanine(in) + Na(+)(in). It catalyses the reaction L-valine(out) + L-glutamine(in) + Na(+)(out) = L-valine(in) + L-glutamine(out) + Na(+)(in). The catalysed reaction is L-glutamine(in) + L-methionine(out) + Na(+)(out) = L-glutamine(out) + L-methionine(in) + Na(+)(in). It carries out the reaction L-glutamine(in) + L-glutamate(out) + Na(+)(out) + H(+)(out) = L-glutamine(out) + L-glutamate(in) + Na(+)(in) + H(+)(in). The enzyme catalyses D-serine(in) + L-glutamine(out) + Na(+)(out) = D-serine(out) + L-glutamine(in) + Na(+)(in). It catalyses the reaction D-serine(in) + L-alanine(out) + Na(+)(out) = D-serine(out) + L-alanine(in) + Na(+)(in). The catalysed reaction is nitrate(in) = nitrate(out). It carries out the reaction iodide(out) = iodide(in). The enzyme catalyses thiocyanate(in) = thiocyanate(out). With respect to regulation, down-regulated at acidic pH. Sodium-coupled antiporter of neutral amino acids. In a tri-substrate transport cycle, exchanges neutral amino acids between the extracellular and intracellular compartments, coupled to the inward cotransport of at least one sodium ion. The preferred substrate is the essential amino acid L-glutamine, a precursor for biosynthesis of proteins, nucleotides and amine sugars as well as an alternative fuel for mitochondrial oxidative phosphorylation. Exchanges L-glutamine with other neutral amino acids such as L-serine, L-threonine and L-asparagine in a bidirectional way. Provides L-glutamine to proliferating stem and activated cells driving the metabolic switch toward cell differentiation. The transport cycle is usually pH-independent, with the exception of L-glutamate. Transports extracellular L-glutamate coupled to the cotransport of one proton and one sodium ion in exchange for intracellular L-glutamine counter-ion. May provide for L-glutamate uptake in glial cells regulating glutamine/glutamate cycle in the nervous system. Can transport D-amino acids. Mediates D-serine release from the retinal glia potentially affecting NMDA receptor function in retinal neurons. Displays sodium- and amino acid-dependent but uncoupled channel-like anion conductance with a preference SCN(-) &gt;&gt; NO3(-) &gt; I(-) &gt; Cl(-). Through binding of the fusogenic protein syncytin-1/ERVW-1 may mediate trophoblasts syncytialization, the spontaneous fusion of their plasma membranes, an essential process in placental development. The sequence is that of Neutral amino acid transporter B(0) (Slc1a5) from Rattus norvegicus (Rat).